A 311-amino-acid polypeptide reads, in one-letter code: Pyrimidine-specific ribonucleoside hydrolase RihA (311 aa).

His240 is a catalytic residue.

Belongs to the IUNH family. RihA subfamily.

Functionally, hydrolyzes cytidine or uridine to ribose and cytosine or uracil, respectively. The protein is Pyrimidine-specific ribonucleoside hydrolase RihA of Salmonella paratyphi A (strain ATCC 9150 / SARB42).